A 563-amino-acid polypeptide reads, in one-letter code: Septation ring formation regulator EzrA (563 aa).

The Extracellular portion of the chain corresponds to 1-2 (ME). The helical transmembrane segment at 3 to 21 (LVIGLLVILLALFAAGYFF) threads the bilayer. Topologically, residues 22-563 (RKKIYTEIDR…KKIKADQSAS (542 aa)) are cytoplasmic. Coiled-coil stretches lie at residues 133–159 (EEKS…AYSH), 243–276 (KGYK…ELDV), and 309–529 (SKMP…ERLF).

It belongs to the EzrA family.

Its subcellular location is the cell membrane. Functionally, negative regulator of FtsZ ring formation; modulates the frequency and position of FtsZ ring formation. Inhibits FtsZ ring formation at polar sites. Interacts either with FtsZ or with one of its binding partners to promote depolymerization. The polypeptide is Septation ring formation regulator EzrA (Bacillus velezensis (strain DSM 23117 / BGSC 10A6 / LMG 26770 / FZB42) (Bacillus amyloliquefaciens subsp. plantarum)).